The chain runs to 206 residues: Ribosomal RNA small subunit methyltransferase G (206 aa).

Residues Gly-73, Leu-78, 124-125 (VE), and Arg-139 contribute to the S-adenosyl-L-methionine site.

Belongs to the methyltransferase superfamily. RNA methyltransferase RsmG family.

Its subcellular location is the cytoplasm. The enzyme catalyses guanosine(527) in 16S rRNA + S-adenosyl-L-methionine = N(7)-methylguanosine(527) in 16S rRNA + S-adenosyl-L-homocysteine. Its function is as follows. Specifically methylates the N7 position of guanine in position 527 of 16S rRNA. The protein is Ribosomal RNA small subunit methyltransferase G of Sodalis glossinidius (strain morsitans).